Consider the following 334-residue polypeptide: Formamidase (334 aa).

The CN hydrolase domain occupies 14–260 (FLVAAIQFPV…WEIVTGEIYP (247 aa)). The active-site Proton acceptor is Glu-60. The Proton donor role is filled by Lys-133. The active-site Nucleophile is Cys-166.

It belongs to the carbon-nitrogen hydrolase superfamily. Aliphatic amidase family.

It carries out the reaction formamide + H2O = formate + NH4(+). Functionally, is an aliphatic amidase with a restricted substrate specificity, as it only hydrolyzes formamide. The protein is Formamidase of Helicobacter pylori (strain P12).